The sequence spans 551 residues: MNLWQQNYDPAGNIWLSSLIASLPILFFFFALIKLKLKGYVAASWTVVIALAVALLFYKMPVDHALASVVYGFFYGLWPIAWIIIAAVFVYKISVKTGQFDIIRSSILSITPDQRLQMLIVGFCFGAFLEGAAGFGAPVAITAALLVGLGFNPLYAAGLCLIVNTAPVAFGAMGIPILVAGQVTDLDSFEIGQMVGRQLPFLTIIVLFWIMAIMDGWRGVKETWPAVMVAGGSFAIAQYLSSNFIGPELPDIISSLVSLVCLTLFLKRWQPVRIFRFGDMGASQVDQTLARTRYTTGQIVRAWSPFLFLTATVTLWSIPPFKALFAPGGALYDWVINVPVPYLDKLVARMPPVVHEATAYAAVYKFDWFSATGTAILFAALLSIVWLKMKPSAAIQTFGSTLKELALPIYSIGMVLAFAFISNYSGLSSTLALALAHTGSAFTFFSPFLGWLGVFLTGSDTSSNALFASLQATAAQQIGVSDVLMVAANTTGGVTGKMISPQSIAIACAAVGLVGKESDLFRFTVKHSLIFTCMVGVITTLQAYVLTWMIP.

12 consecutive transmembrane segments (helical) span residues 13–33 (NIWLSSLIASLPILFFFFALI), 37–57 (LKGYVAASWTVVIALAVALLF), 69–89 (VVYGFFYGLWPIAWIIIAAVF), 131–151 (GAAGFGAPVAITAALLVGLGF), 159–179 (LCLIVNTAPVAFGAMGIPILV), 194–214 (MVGRQLPFLTIIVLFWIMAIM), 245–265 (IGPELPDIISSLVSLVCLTLF), 306–326 (FLFLTATVTLWSIPPFKALFA), 366–386 (FDWFSATGTAILFAALLSIVW), 405–425 (LALPIYSIGMVLAFAFISNYS), 438–458 (TGSAFTFFSPFLGWLGVFLTG), and 530–550 (IFTCMVGVITTLQAYVLTWMI).

It belongs to the lactate permease family.

It is found in the cell inner membrane. It carries out the reaction (S)-lactate(in) + H(+)(in) = (S)-lactate(out) + H(+)(out). It catalyses the reaction (R)-lactate(in) + H(+)(in) = (R)-lactate(out) + H(+)(out). The catalysed reaction is glycolate(in) + H(+)(in) = glycolate(out) + H(+)(out). Its function is as follows. Uptake of L-lactate across the membrane. Can also transport D-lactate and glycolate. Seems to be driven by a proton motive force. The sequence is that of L-lactate permease (lldP) from Salmonella typhi.